The primary structure comprises 640 residues: 2-hydroxyacyl-CoA lyase 2 (640 aa).

The helical transmembrane segment at Val-2–Val-22 threads the bilayer. Glu-102 contacts thiamine diphosphate. The thiamine pyrophosphate binding stretch occupies residues Asp-477–Cys-557. 2 residues coordinate Mg(2+): Asp-528 and Asn-554.

Belongs to the TPP enzyme family. It depends on Mg(2+) as a cofactor. Thiamine diphosphate is required as a cofactor.

The protein resides in the endoplasmic reticulum membrane. It carries out the reaction 2-hydroxyoctadecanoyl-CoA = heptadecanal + formyl-CoA. It catalyses the reaction (2R)-hydroxyhexadecanoyl-CoA = pentadecanal + formyl-CoA. Its function is as follows. Endoplasmic reticulum 2-OH acyl-CoA lyase involved in the cleavage (C1 removal) reaction in the fatty acid alpha-oxydation in a thiamine pyrophosphate (TPP)-dependent manner. The sequence is that of 2-hydroxyacyl-CoA lyase 2 from Caenorhabditis elegans.